Reading from the N-terminus, the 387-residue chain is Phosphoglycerate kinase (387 aa).

Substrate contacts are provided by residues 21–23 (DLN), Arg-36, 59–62 (HLGR), Arg-114, and Arg-147. ATP contacts are provided by residues Lys-198, Glu-314, and 340–343 (GGDT).

The protein belongs to the phosphoglycerate kinase family. Monomer.

The protein resides in the cytoplasm. It catalyses the reaction (2R)-3-phosphoglycerate + ATP = (2R)-3-phospho-glyceroyl phosphate + ADP. It functions in the pathway carbohydrate degradation; glycolysis; pyruvate from D-glyceraldehyde 3-phosphate: step 2/5. This Erwinia tasmaniensis (strain DSM 17950 / CFBP 7177 / CIP 109463 / NCPPB 4357 / Et1/99) protein is Phosphoglycerate kinase.